The primary structure comprises 626 residues: Transketolase-like protein 2 (626 aa).

Residues Ser41, His78, and 124–126 (GSL) each bind thiamine diphosphate. Mg(2+) is bound at residue Asp156. Residues Gly157 and Asn186 each coordinate thiamine diphosphate. Residues Asn186 and Leu188 each contribute to the Mg(2+) site. Positions 248 and 262 each coordinate thiamine diphosphate. Substrate is bound by residues His262 and Ser349. Residues Glu370 and Phe396 each coordinate thiamine diphosphate. Glu370 serves as the catalytic Proton donor. Substrate contacts are provided by His420 and Asp428. Gln432 is a thiamine diphosphate binding site.

It belongs to the transketolase family. In terms of assembly, homodimer. Requires Mg(2+) as cofactor. Ca(2+) is required as a cofactor. The cofactor is Mn(2+). Co(2+) serves as cofactor. It depends on thiamine diphosphate as a cofactor. Overexpressed in hepatoma cancer cells.

It carries out the reaction D-sedoheptulose 7-phosphate + D-glyceraldehyde 3-phosphate = aldehydo-D-ribose 5-phosphate + D-xylulose 5-phosphate. Plays an essential role in total transketolase activity and cell proliferation in cancer cells; after transfection with anti-TKTL1 siRNA, total transketolase activity dramatically decreases and proliferation was significantly inhibited in cancer cells. Plays a pivotal role in carcinogenesis. The sequence is that of Transketolase-like protein 2 (TKTL2) from Homo sapiens (Human).